Consider the following 362-residue polypeptide: MTEFHLQSQMPSIRLIFRRLSLGRIKPSQSPRCSTSFMVVPSFSIAEHWRRMKGANLSQGMEFELLGLTTDPQLQRLLFVVFLGMYTATLLGNLVMFLLIHVSATLHTPMYSLLKSLSFLDFCYSSTVVPQTLVNFLAKRKVISYFGCMTQMFFYAGFATSECYLIAAMAYDRYAAICNPLLYSTIMSPEVCASLIVGSYSAGFLNSLIHTGCIFSLKFCGAHVVTHFFCDGPPILSLSCVDTSLCEILLFIFAGFNLLSCTLTILISYFLILNTILKMSSAQGRFKAFSTCASHLTAICLFFGTTLFMYLRPRSSYSLTQDRTVAVIYTVVIPVLNPLMYSLRNKDVKKALIKVWGRKTME.

Over 1 to 79 the chain is Extracellular; it reads MTEFHLQSQM…TDPQLQRLLF (79 aa). An N-linked (GlcNAc...) asparagine glycan is attached at Asn-56. The chain crosses the membrane as a helical span at residues 80–100; sequence VVFLGMYTATLLGNLVMFLLI. The Cytoplasmic segment spans residues 101 to 116; it reads HVSATLHTPMYSLLKS. A helical membrane pass occupies residues 117 to 139; the sequence is LSFLDFCYSSTVVPQTLVNFLAK. The Extracellular segment spans residues 140 to 150; the sequence is RKVISYFGCMT. Residues Cys-148 and Cys-230 are joined by a disulfide bond. Residues 151-171 form a helical membrane-spanning segment; that stretch reads QMFFYAGFATSECYLIAAMAY. Over 172–194 the chain is Cytoplasmic; that stretch reads DRYAAICNPLLYSTIMSPEVCAS. Residues 195–215 form a helical membrane-spanning segment; sequence LIVGSYSAGFLNSLIHTGCIF. Residues 216–247 are Extracellular-facing; the sequence is SLKFCGAHVVTHFFCDGPPILSLSCVDTSLCE. Residues 248–268 form a helical membrane-spanning segment; that stretch reads ILLFIFAGFNLLSCTLTILIS. Residues 269-290 lie on the Cytoplasmic side of the membrane; sequence YFLILNTILKMSSAQGRFKAFS. Residues 291–311 form a helical membrane-spanning segment; sequence TCASHLTAICLFFGTTLFMYL. The Extracellular segment spans residues 312 to 322; it reads RPRSSYSLTQD. Residues 323–343 form a helical membrane-spanning segment; the sequence is RTVAVIYTVVIPVLNPLMYSL. The Cytoplasmic segment spans residues 344 to 362; the sequence is RNKDVKKALIKVWGRKTME.

Belongs to the G-protein coupled receptor 1 family.

The protein localises to the cell membrane. Functionally, odorant receptor. This chain is Olfactory receptor 5AU1 (OR5AU1), found in Homo sapiens (Human).